The primary structure comprises 423 residues: tRNA(Ile)-lysidine synthase (423 aa).

Residue 29–34 (SGGKDS) coordinates ATP.

The protein belongs to the tRNA(Ile)-lysidine synthase family.

The protein localises to the cytoplasm. The enzyme catalyses cytidine(34) in tRNA(Ile2) + L-lysine + ATP = lysidine(34) in tRNA(Ile2) + AMP + diphosphate + H(+). In terms of biological role, ligates lysine onto the cytidine present at position 34 of the AUA codon-specific tRNA(Ile) that contains the anticodon CAU, in an ATP-dependent manner. Cytidine is converted to lysidine, thus changing the amino acid specificity of the tRNA from methionine to isoleucine. The protein is tRNA(Ile)-lysidine synthase of Lactococcus lactis subsp. lactis (strain IL1403) (Streptococcus lactis).